Consider the following 1065-residue polypeptide: Probable arabinosyltransferase B (1065 aa).

Helical transmembrane passes span 15–37, 204–226, 241–263, 394–413, 417–436, 441–463, 510–527, 540–557, 567–589, 596–618, 633–655, and 667–689; these read WVAT…LPVV, LKLA…LWRL, NWRT…HVIG, YSRL…TLGV, GLIA…RILV, VVGT…TVVF, FGFL…FIML, AWRL…LMFT, LFAA…AVLG, AFLA…WWYV, GGIT…AIWL, and LARA…VFIA.

The protein belongs to the emb family.

The protein localises to the cell membrane. In terms of biological role, arabinosyl transferase responsible for the polymerization of arabinose into the arabinan of arabinogalactan. The chain is Probable arabinosyltransferase B (embB) from Mycobacterium avium.